The primary structure comprises 370 residues: GTPase Obg (370 aa).

An Obg domain is found at M1 to L159. The OBG-type G domain occupies A160–A334. GTP is bound by residues G166–S173, F191–A195, D213–G216, N284–D287, and S315–L317. Mg(2+) contacts are provided by S173 and T193. Residues E344–A370 are disordered.

It belongs to the TRAFAC class OBG-HflX-like GTPase superfamily. OBG GTPase family. Monomer. It depends on Mg(2+) as a cofactor.

The protein resides in the cytoplasm. An essential GTPase which binds GTP, GDP and possibly (p)ppGpp with moderate affinity, with high nucleotide exchange rates and a fairly low GTP hydrolysis rate. Plays a role in control of the cell cycle, stress response, ribosome biogenesis and in those bacteria that undergo differentiation, in morphogenesis control. This is GTPase Obg from Burkholderia ambifaria (strain ATCC BAA-244 / DSM 16087 / CCUG 44356 / LMG 19182 / AMMD) (Burkholderia cepacia (strain AMMD)).